Consider the following 210-residue polypeptide: Ion-translocating oxidoreductase complex subunit G (210 aa).

Residues 9-29 (SLVLALFAIAATALVTITYAL) traverse the membrane as a helical segment. Thr-176 carries the FMN phosphoryl threonine modification.

This sequence belongs to the RnfG family. As to quaternary structure, the complex is composed of six subunits: RnfA, RnfB, RnfC, RnfD, RnfE and RnfG. FMN serves as cofactor.

The protein localises to the cell inner membrane. Part of a membrane-bound complex that couples electron transfer with translocation of ions across the membrane. This chain is Ion-translocating oxidoreductase complex subunit G, found in Aliivibrio fischeri (strain ATCC 700601 / ES114) (Vibrio fischeri).